The primary structure comprises 210 residues: Ribosomal RNA large subunit methyltransferase E (210 aa).

Residues Gly-61, Trp-63, Asp-81, Asp-97, and Asp-122 each contribute to the S-adenosyl-L-methionine site. The active-site Proton acceptor is the Lys-162. Over residues 187 to 196 (KPEASRKRSP) the composition is skewed to basic and acidic residues. A disordered region spans residues 187–210 (KPEASRKRSPEVYALGQGKRAHMK).

Belongs to the class I-like SAM-binding methyltransferase superfamily. RNA methyltransferase RlmE family.

It localises to the cytoplasm. The enzyme catalyses uridine(2552) in 23S rRNA + S-adenosyl-L-methionine = 2'-O-methyluridine(2552) in 23S rRNA + S-adenosyl-L-homocysteine + H(+). Its function is as follows. Specifically methylates the uridine in position 2552 of 23S rRNA at the 2'-O position of the ribose in the fully assembled 50S ribosomal subunit. This chain is Ribosomal RNA large subunit methyltransferase E, found in Stenotrophomonas maltophilia (strain R551-3).